The primary structure comprises 555 residues: Tetracycline 7-halogenase (555 aa).

22–27 (GSGLSG) serves as a coordination point for FAD.

This sequence belongs to the flavin-dependent halogenase family. Bacterial tryptophan halogenase subfamily. Homodimer.

The enzyme catalyses tetracycline + FADH2 + chloride + O2 = 7-chlorotetracycline + FAD + 2 H2O + H(+). The protein operates within antibiotic biosynthesis. In terms of biological role, involved in the biosynthesis of chlorotetracycline (CTC), an important member from antibiotics tetracycline (TC) family, which inhibits protein synthesis in bacteria and is widely involved in clinical therapy, animal feeds and aquaculture. Utilizes FADH(2) supplied by the flavin reductase CtcQ, to catalyze the chlorination of tetracycline (TC) at C7 position, leading to the production of 7-chlorotetracycline. The enzyme forms a lysine chloramine intermediate on an internal lysine residue before transferring the chlorine to the substrate. It is stereo-selective for the 4S (natural) isomer of tetracycline. The sequence is that of Tetracycline 7-halogenase from Kitasatospora aureofaciens (Streptomyces aureofaciens).